A 287-amino-acid polypeptide reads, in one-letter code: tRNA pseudouridine synthase B (287 aa).

Residue D38 is the Nucleophile of the active site.

It belongs to the pseudouridine synthase TruB family. Type 1 subfamily.

The enzyme catalyses uridine(55) in tRNA = pseudouridine(55) in tRNA. In terms of biological role, responsible for synthesis of pseudouridine from uracil-55 in the psi GC loop of transfer RNAs. In Aquifex aeolicus (strain VF5), this protein is tRNA pseudouridine synthase B.